The primary structure comprises 156 residues: D-aminoacyl-tRNA deacylase (156 aa).

The Gly-cisPro motif, important for rejection of L-amino acids signature appears at 139 to 140; it reads GP.

Belongs to the DTD family. In terms of assembly, homodimer.

The protein localises to the cytoplasm. It catalyses the reaction glycyl-tRNA(Ala) + H2O = tRNA(Ala) + glycine + H(+). The enzyme catalyses a D-aminoacyl-tRNA + H2O = a tRNA + a D-alpha-amino acid + H(+). An aminoacyl-tRNA editing enzyme that deacylates mischarged D-aminoacyl-tRNAs. Also deacylates mischarged glycyl-tRNA(Ala), protecting cells against glycine mischarging by AlaRS. Acts via tRNA-based rather than protein-based catalysis; rejects L-amino acids rather than detecting D-amino acids in the active site. By recycling D-aminoacyl-tRNA to D-amino acids and free tRNA molecules, this enzyme counteracts the toxicity associated with the formation of D-aminoacyl-tRNA entities in vivo and helps enforce protein L-homochirality. The chain is D-aminoacyl-tRNA deacylase from Marinobacter nauticus (strain ATCC 700491 / DSM 11845 / VT8) (Marinobacter aquaeolei).